We begin with the raw amino-acid sequence, 277 residues long: Cis-2,3-dihydrobiphenyl-2,3-diol dehydrogenase (277 aa).

NAD(+) contacts are provided by residues 9–36 (LITG…AVLD) and Asp-59. Residue Ser-142 participates in substrate binding. Residue Tyr-155 is the Proton acceptor of the active site. Lys-159 provides a ligand contact to NAD(+).

The protein belongs to the short-chain dehydrogenases/reductases (SDR) family.

It catalyses the reaction (2R,3S)-3-phenylcyclohexa-3,5-diene-1,2-diol + NAD(+) = biphenyl-2,3-diol + NADH + H(+). It functions in the pathway xenobiotic degradation; biphenyl degradation; 2-hydroxy-2,4-pentadienoate and benzoate from biphenyl: step 2/4. This Paraburkholderia xenovorans (strain LB400) protein is Cis-2,3-dihydrobiphenyl-2,3-diol dehydrogenase (bphB).